The chain runs to 453 residues: uncharacterized protein (453 aa).

[4Fe-4S] cluster-binding residues include Cys-74, Cys-80, Cys-83, and Cys-162. Residues Gln-286, Tyr-315, Glu-336, and Asp-384 each coordinate S-adenosyl-L-methionine. Cys-411 acts as the Nucleophile in catalysis.

The protein belongs to the class I-like SAM-binding methyltransferase superfamily. RNA M5U methyltransferase family.

This is an uncharacterized protein from Staphylococcus aureus (strain Mu50 / ATCC 700699).